The primary structure comprises 405 residues: GTPase Obg (405 aa).

The region spanning 1–159 is the Obg domain; sequence MRFIDEAVVT…KVLKFELKVV (159 aa). Residues 160-333 form the OBG-type G domain; that stretch reads ADVGLIGLPN…IKYHLMNEIE (174 aa). Residues 166–173, 191–195, 213–216, 283–286, and 314–316 each bind GTP; these read GLPNAGKS, FTTLV, DIPG, NKID, and ATL. Mg(2+) contacts are provided by Ser-173 and Thr-193. The segment covering 371 to 382 has biased composition (basic and acidic residues); sequence YRAARKAAREGT. Residues 371-405 are disordered; it reads YRAARKAAREGTDLSDDDFDDSDDDDDGVEVVYAP. Residues 383–399 are compositionally biased toward acidic residues; sequence DLSDDDFDDSDDDDDGV.

Belongs to the TRAFAC class OBG-HflX-like GTPase superfamily. OBG GTPase family. As to quaternary structure, monomer. Requires Mg(2+) as cofactor.

Its subcellular location is the cytoplasm. Functionally, an essential GTPase which binds GTP, GDP and possibly (p)ppGpp with moderate affinity, with high nucleotide exchange rates and a fairly low GTP hydrolysis rate. Plays a role in control of the cell cycle, stress response, ribosome biogenesis and in those bacteria that undergo differentiation, in morphogenesis control. The protein is GTPase Obg of Psychrobacter cryohalolentis (strain ATCC BAA-1226 / DSM 17306 / VKM B-2378 / K5).